A 628-amino-acid polypeptide reads, in one-letter code: Leucine-rich repeat and fibronectin type-III domain-containing protein 3 (628 aa).

A signal peptide spans 1 to 16 (MAVLPLLLCLLPLAPA). The Extracellular portion of the chain corresponds to 17–540 (SSPSQPATPS…APHAPFLGGT (524 aa)). An LRRNT domain is found at 19 to 59 (PSQPATPSPCPRRCRCQTQSLPLSVLCPGAGLLFVPPSLDR). LRR repeat units follow at residues 84 to 105 (GLLHLSLSRNTIRHVAAGAFAD), 108 to 129 (ALRALHLDGNRLTSLGEGQLRG), 132 to 153 (NLRHLILSNNQLAALAAGALDD), 157 to 178 (TLEDLDLSYNNLEQLPWEALGR), 181 to 202 (NVNTLGLDHNLLASVPAGAFSR), and 205 to 226 (KLARLDMTSNRLTTIPPDPLFS). The LRRCT domain occupies 249-295 (NPLHCNCELVWLRRLAREDDLEACASPPALGGRYFWAVGEEEFVCEP). Positions 295–382 (PPVVTHRSPP…GEATAAVELT (88 aa)) constitute an Ig-like domain. C317 and C366 form a disulfide bridge. 2 N-linked (GlcNAc...) asparagine glycosylation sites follow: N348 and N393. The disordered stretch occupies residues 380–432 (ELTVGPPPPPQLANSTSCDPPRDGDPDALTPPSAASASAAAKAADTGPPTDRG). Residues 406–429 (DALTPPSAASASAAAKAADTGPPT) are compositionally biased toward low complexity. One can recognise a Fibronectin type-III domain in the interval 427 to 525 (PPTDRGVQVT…GCARFSTEPA (99 aa)). A helical transmembrane segment spans residues 541 to 561 (MIIALGGVIVASVLVFIFVLL). Over 562–628 (MRYKVHGGQP…WRPSHEPTGP (67 aa)) the chain is Cytoplasmic. Residues 587 to 628 (QTNGSLGPTPAPPAPEPAAPRAHTVVQLDCEPWRPSHEPTGP) are disordered. Pro residues predominate over residues 595–604 (TPAPPAPEPA). The segment covering 617–628 (EPWRPSHEPTGP) has biased composition (basic and acidic residues).

The protein belongs to the LRFN family. As to quaternary structure, can form heteromeric complexes with LRFN1, LRFN2, LRFN4 and LRFN5. Able to form homomeric complexes across cell junctions, between adjacent cells. Does not interact with DLG4. Post-translationally, N-glycosylated.

It is found in the cell membrane. Its subcellular location is the cell projection. The protein localises to the axon. The protein resides in the dendrite. It localises to the synapse. It is found in the presynaptic cell membrane. Its subcellular location is the postsynaptic cell membrane. In terms of biological role, cell adhesion molecule that mediates homophilic cell-cell adhesion in a Ca(2+)-independent manner. Promotes neurite outgrowth in hippocampal neurons. This chain is Leucine-rich repeat and fibronectin type-III domain-containing protein 3 (LRFN3), found in Ailuropoda melanoleuca (Giant panda).